Reading from the N-terminus, the 96-residue chain is Large ribosomal subunit protein bL27 (96 aa).

Positions methionine 1 to phenylalanine 9 are excised as a propeptide. Residues glycine 14–glycine 36 form a disordered region.

The protein belongs to the bacterial ribosomal protein bL27 family. Post-translationally, the N-terminus is cleaved by ribosomal processing cysteine protease Prp.

The chain is Large ribosomal subunit protein bL27 from Bacillus anthracis (strain A0248).